Consider the following 147-residue polypeptide: Large ribosomal subunit protein uL15 (147 aa).

The tract at residues 1–58 is disordered; it reads MKLFELKPAPGAKKRPKRVGRGESSGHGKTSTRGHKGQWARSGGGVRPGFEGGQMPLT. Gly residues predominate over residues 42-52; it reads SGGGVRPGFEG.

Belongs to the universal ribosomal protein uL15 family. As to quaternary structure, part of the 50S ribosomal subunit.

In terms of biological role, binds to the 23S rRNA. The chain is Large ribosomal subunit protein uL15 from Caldicellulosiruptor saccharolyticus (strain ATCC 43494 / DSM 8903 / Tp8T 6331).